Consider the following 322-residue polypeptide: Tropinone reductase homolog At2g29260, chloroplastic (322 aa).

The transit peptide at 1–61 (MVLDMASHLY…YASQSSIAIT (61 aa)) directs the protein to the chloroplast. 74–98 (LVTGGTRGIGRAIVEELAGLGAEVH) contacts NADP(+). Ser207 serves as a coordination point for substrate.

It belongs to the short-chain dehydrogenases/reductases (SDR) family. SDR65C subfamily.

It localises to the plastid. The protein resides in the chloroplast. This chain is Tropinone reductase homolog At2g29260, chloroplastic, found in Arabidopsis thaliana (Mouse-ear cress).